The primary structure comprises 194 residues: Histone H1.0 (194 aa).

Methionine 1 carries the N-acetylmethionine modification. Over residues 1 to 11 the composition is skewed to low complexity; sequence MTENSTSAPAA. The tract at residues 1–28 is disordered; it reads MTENSTSAPAAKPKRAKASKKSTDHPKY. Threonine 2 bears the N-acetylthreonine; in Histone H1.0, N-terminally processed mark. Positions 24 to 97 constitute an H15 domain; that stretch reads DHPKYSDMIV…GASGSFRLAK (74 aa). Arginine 42 bears the Citrulline mark. The segment at 86-194 is disordered; the sequence is GVGASGSFRL…SSAKRASKKK (109 aa). Serine 104 carries the post-translational modification ADP-ribosylserine. Residues 105 to 194 show a composition bias toward basic residues; the sequence is VAFKKTKKEV…SSAKRASKKK (90 aa).

Belongs to the histone H1/H5 family. Post-translationally, ADP-ribosylated on Ser-104 in response to DNA damage.

Its subcellular location is the nucleus. The protein localises to the chromosome. Its function is as follows. Histones H1 are necessary for the condensation of nucleosome chains into higher-order structures. The histones H1.0 are found in cells that are in terminal stages of differentiation or that have low rates of cell division. This Mus musculus (Mouse) protein is Histone H1.0 (H1-0).